The chain runs to 324 residues: Dolichyl-phosphate beta-glucosyltransferase (324 aa).

The Lumenal portion of the chain corresponds to 1-7; it reads MATLLLQ. A helical membrane pass occupies residues 8–28; it reads LLGLGVALAAAALILVSIVAF. Residues 29–324 are Cytoplasmic-facing; that stretch reads ITATKMPPCY…WRLKQTRKAS (296 aa).

Belongs to the glycosyltransferase 2 family.

It is found in the endoplasmic reticulum membrane. The catalysed reaction is a di-trans,poly-cis-dolichyl phosphate + UDP-alpha-D-glucose = a di-trans,poly-cis-dolichyl beta-D-glucosyl phosphate + UDP. The protein operates within protein modification; protein glycosylation. Its function is as follows. Dolichyl-phosphate beta-glucosyltransferase that operates in the biosynthetic pathway of dolichol-linked oligosaccharides, the glycan precursors employed in protein asparagine (N)-glycosylation. The assembly of dolichol-linked oligosaccharides begins on the cytosolic side of the endoplasmic reticulum membrane and finishes in its lumen. The sequential addition of sugars to dolichol pyrophosphate produces dolichol-linked oligosaccharides containing fourteen sugars, including two GlcNAcs, nine mannoses and three glucoses. Once assembled, the oligosaccharide is transferred from the lipid to nascent proteins by oligosaccharyltransferases. Dolichyl-phosphate beta-glucosyltransferase produces dolichyl beta-D-glucosyl phosphate/Dol-P-Glc, the glucose donor substrate used sequentially by ALG6, ALG8 and ALG10 to add glucose residues on top of the Man(9)GlcNAc(2)-PP-Dol structure. These are the three last steps in the biosynthetic pathway of dolichol-linked oligosaccharides to produce Glc(3)Man(9)GlcNAc(2)-PP-Dol. The enzyme is most probably active on the cytoplasmic side of the endoplasmic reticulum while its product Dol-P-Glc is the substrate for ALG6, ALG8 and ALG11 in the lumen of the endoplasmic reticulum. This chain is Dolichyl-phosphate beta-glucosyltransferase, found in Mus musculus (Mouse).